Here is a 740-residue protein sequence, read N- to C-terminus: Glycerol dehydrogenase large subunit (740 aa).

A signal peptide spans 1–29 (MRRPYLLATAAGLALACSPLIAHAQFAPA). 2 disordered regions span residues 28–105 (PAGA…GDWV) and 442–468 (LPVE…PWSV). The segment covering 34–43 (EPSSSVPGPG) has biased composition (low complexity). Positions 46–58 (SEPTENSPKSQSY) are enriched in polar residues.

Belongs to the bacterial PQQ dehydrogenase family. Requires pyrroloquinoline quinone as cofactor.

Its subcellular location is the secreted. It carries out the reaction glycerol + A = dihydroxyacetone + AH2. In terms of biological role, catalyzes the oxidation of glycerol to glycerone. Also acts, more slowly, on a number of other polyols including D-sorbitol, D-arabinitol, D-mannitol, meso-erythritol, adonitol and propylene glycol. This is Glycerol dehydrogenase large subunit (sldA) from Gluconobacter thailandicus.